The primary structure comprises 336 residues: Glucokinase (336 aa).

Position 12–17 (12–17 (ADIGGT)) interacts with ATP.

The protein belongs to the bacterial glucokinase family.

Its subcellular location is the cytoplasm. It carries out the reaction D-glucose + ATP = D-glucose 6-phosphate + ADP + H(+). The polypeptide is Glucokinase (Helicobacter pylori (strain J99 / ATCC 700824) (Campylobacter pylori J99)).